The chain runs to 155 residues: UPF0260 protein Smed_0627 (155 aa).

Belongs to the UPF0260 family.

This Sinorhizobium medicae (strain WSM419) (Ensifer medicae) protein is UPF0260 protein Smed_0627.